A 312-amino-acid polypeptide reads, in one-letter code: Lipid-translocating exporter-like protein RTA1 (312 aa).

The disordered stretch occupies residues 1–21 (MSPESKKITAHGSTSMPLSRT). A compositionally biased stretch (polar residues) spans 11–21 (HGSTSMPLSRT). The next 6 membrane-spanning stretches (helical) occupy residues 29–49 (IPLT…FFLA), 61–81 (LSTM…YFIC), 103–123 (FITF…LLAG), 142–162 (AMIT…SFHV), 183–203 (FMMV…RSAY), and 223–243 (SLML…ILPI). Residues Asn-258 and Asn-304 are each glycosylated (N-linked (GlcNAc...) asparagine).

The protein belongs to the lipid-translocating exporter (LTE) (TC 9.A.26.1) family.

It is found in the membrane. The protein operates within siderophore biosynthesis. Functionally, lipid-translocating exporter-like protein; part of the gene cluster that mediates the biosynthesis of hydroxamate-containing siderophores that play a critical role in virulence via intracellular iron acquisition during macrophage infection. The sequence is that of Lipid-translocating exporter-like protein RTA1 from Ajellomyces capsulatus (Darling's disease fungus).